The primary structure comprises 443 residues: Endothelin receptor type B (443 aa).

A signal peptide spans 1 to 26 (MQPLRSLCGRALVALIFACGVAGVQS). Over 27–102 (EERGFPPAGA…GPIEIKDTFK (76 aa)) the chain is Extracellular. Positions 53–89 (TFWPRGSNASLPRSSSPPQMPKGGRMAGPPARTLTPP) are disordered. The span at 59–69 (SNASLPRSSSP) shows a compositional bias: polar residues. Asn-60 is a glycosylation site (N-linked (GlcNAc...) asparagine). A helical membrane pass occupies residues 103 to 127 (YINTVVSCLVFVLGIIGNSTLLRII). At 128 to 138 (YKNKCMRNGPN) the chain is on the cytoplasmic side. A helical membrane pass occupies residues 139 to 164 (ILIASLALGDLLHIIIDIPINVYKLL). Residues 165–176 (AEDWPFGVEMCK) lie on the Extracellular side of the membrane. Cysteines 175 and 256 form a disulfide. A helical membrane pass occupies residues 177-198 (LVPFIQKASVGITVLSLCALSI). Residues 199 to 219 (DRYRAVASWSRIKGIGVPKWT) are Cytoplasmic-facing. Residues 220–244 (AVEIVLIWVVSVVLAVPEALGFDMI) form a helical membrane-spanning segment. The Extracellular segment spans residues 245-272 (TTDYKGNRLRICLLHPTQKTAFMQFYKT). A helical transmembrane segment spans residues 273–297 (AKDWWLFSFYFCLPLAITAFFYTLM). Topologically, residues 298–325 (TCEMLRKKSGMQIALNDHLKQRREVAKT) are cytoplasmic. Position 306 is a phosphoserine (Ser-306). A helical membrane pass occupies residues 326–351 (VFCLVLVFALCWLPLHLSRILKLTLY). The Extracellular segment spans residues 352 to 363 (DQNDSNRCELLS). Residue Asn-354 is glycosylated (N-linked (GlcNAc...) asparagine). Residues 364–390 (FLLVLDYIGINMASLNSCINPIALYLV) traverse the membrane as a helical segment. Topologically, residues 391 to 443 (SKRFKNCFKSCLCCWCQSFEEKQSLEEKQSCLKFKANDHGYDNFRSSNKYSSS) are cytoplasmic. 3 S-palmitoyl cysteine lipidation sites follow: Cys-403, Cys-404, and Cys-406. Phosphoserine is present on Ser-420. At Tyr-440 the chain carries Phosphotyrosine. Ser-441, Ser-442, and Ser-443 each carry phosphoserine.

This sequence belongs to the G-protein coupled receptor 1 family. Endothelin receptor subfamily. EDNRB sub-subfamily.

The protein resides in the cell membrane. Non-specific receptor for endothelin 1, 2, and 3. Mediates its action by association with G proteins that activate a phosphatidylinositol-calcium second messenger system. The polypeptide is Endothelin receptor type B (EDNRB) (Sus scrofa (Pig)).